The sequence spans 132 residues: Small ribosomal subunit protein uS8 (132 aa).

The protein belongs to the universal ribosomal protein uS8 family. As to quaternary structure, part of the 30S ribosomal subunit. Contacts proteins S5 and S12.

Its function is as follows. One of the primary rRNA binding proteins, it binds directly to 16S rRNA central domain where it helps coordinate assembly of the platform of the 30S subunit. The chain is Small ribosomal subunit protein uS8 from Alkaliphilus oremlandii (strain OhILAs) (Clostridium oremlandii (strain OhILAs)).